The sequence spans 347 residues: GMP reductase (347 aa).

108–131 serves as a coordination point for NADP(+); sequence ADFEKTVQILALDPALNFVCIDVA. Gly181 and Gly183 together coordinate K(+). Cys186 (thioimidate intermediate) is an active-site residue. Residue 216-239 participates in NADP(+) binding; that stretch reads IVSDGGCTMPGDVAKAFGGGADFV.

It belongs to the IMPDH/GMPR family. GuaC type 1 subfamily. Homotetramer.

The catalysed reaction is IMP + NH4(+) + NADP(+) = GMP + NADPH + 2 H(+). In terms of biological role, catalyzes the irreversible NADPH-dependent deamination of GMP to IMP. It functions in the conversion of nucleobase, nucleoside and nucleotide derivatives of G to A nucleotides, and in maintaining the intracellular balance of A and G nucleotides. This Salmonella paratyphi B (strain ATCC BAA-1250 / SPB7) protein is GMP reductase.